A 1024-amino-acid chain; its full sequence is MTMITDSLAVVLQRRDWENPGVTQLNRLAAHPPFASWRNSEEARTNRPSQQLRSLNGEWQFVWFPAPEAVPESWLECDLPVADTVVVPSNWQMHGYDAPIYTNVTYPITVNPPFVPTENPTGYYSLTFNVDESWLQEGQTRIIFDGVNSAFHLWCNGRWVGYGQDSRLPSEFDLSAFLRAGENRLAVMVLRWSDGSYLEDQDMWRMSGIFRDVSLLHKPTTQIRDFHVATRFNDDFSRAVLEAEVQMYGELRDELRVTVSLWQGETQVASGTAPFGGEIIHERGGYADRVTLGLNVENPKLWSAEIPNIYRAVVELHTADGTLIEAEACDVGFREVRIENGLLLLNGKPLLIRGVNRHEHHPLHGQVMDEQTMVQDILLMKQNNFNAVRCSHYPNHPLWYTLCDRYGLYVVDEANIETHGMVPMNRLTDDPRWLPAMSERVTRMVQRDRNHPSVIIWSLGNESGHGANHDALYRWIKSVDPSRPVQYEGGGADTSATDIICPMYARVDEDQLFPAVPKWSIKKWLSLPGETRPLILCEYAHAMGNSLGGFAKYWQAFRQYPRLQGGFVWDWVDQSLIKYDENGNPWSAYGGDFGDTPNDRQFCMNGLVFADRTPHPALTEAKHQQQFFQFRLSGRTIEVTSEYLFRQSDNELLHWTVALDGKPLASSEVPMNVAPQGKQVIELPELPRLESTGQLWLTVHVVQPNATAWSEAGHISAWQQWRLAANLSVTLPSAPHAIPQLTTSETDFCIELDNKRWQFNRQSGFLSQMWIGDEKQLLTPLRDQFTRAPLDNDIGVSEATRIDPNAWVERWKAAGHYQAEAALLQCTADTLADAVLITTAHTWQHQGKTLFISRKTYRIDGSGQMAITVDVEVASDTPHPARIGLTCQLAQVAERVNWLGLGPQENYPDRLTAACFDRWDLPLSDMYTPYVFPSENGLRCGTRELNYGPHQWRGDFQFNISRYSQQQLMETSHRHLLHAEEGTWLNIDGFHMGIGGDDSWSPSVSAEFQLSAGRYHYQLVWCQK.

2 residues coordinate substrate: asparagine 103 and aspartate 202. Aspartate 202 is a binding site for Na(+). Mg(2+)-binding residues include glutamate 417, histidine 419, and glutamate 462. Substrate-binding positions include glutamate 462 and 538-541 (EYAH). Glutamate 462 functions as the Proton donor in the catalytic mechanism. The active-site Nucleophile is the glutamate 538. Asparagine 598 provides a ligand contact to Mg(2+). Na(+) contacts are provided by phenylalanine 602 and asparagine 605. Residues asparagine 605 and tryptophan 1000 each contribute to the substrate site.

This sequence belongs to the glycosyl hydrolase 2 family. In terms of assembly, homotetramer. Mg(2+) is required as a cofactor. It depends on Na(+) as a cofactor.

It carries out the reaction Hydrolysis of terminal non-reducing beta-D-galactose residues in beta-D-galactosides.. The sequence is that of Beta-galactosidase from Shigella dysenteriae serotype 1 (strain Sd197).